Here is a 400-residue protein sequence, read N- to C-terminus: MQDIVREAMERDEAERQTQSSLEDSDDQFGDPRIVIVGAGGAGNNTINRLYNIGVEGADTVAINTDKQHLKMIEADTKILVGKSLTQGLGAGGDPSMGERATEMAQGTIKDVLGDADLVFVTAGMGGGTGTGAAPVVAKIAKEQGAIVVGMVSTPFNVERARTVKAEEGLENLRNEADSIIVLDNNRLLDYVPNLPIGKAFSVMDQIIAETVKGISETITQPSLINLDYADMSTIMNQGGVAVMLVGETQDKNKTQEVVNDAMNHPLLDVDYRGASGGLVHITGGPDLTLKEAEGIASNITERLEAAANVIWGARIQDEYKGKVRVMAIMTGVQSAQVLGPSTQKQADKSRQSIQSRESQQQHSGSEFDSSERAQTAQSGTWSDGGRDEVEKNNGLDVIR.

Over residues 1 to 16 (MQDIVREAMERDEAER) the composition is skewed to basic and acidic residues. The interval 1–30 (MQDIVREAMERDEAERQTQSSLEDSDDQFG) is disordered. Residues 41-45 (GAGNN), 128-130 (GTG), Glu159, Arg162, and Asp205 each bind GTP. The interval 338 to 400 (VLGPSTQKQA…EKNNGLDVIR (63 aa)) is disordered. Over residues 352–364 (QSIQSRESQQQHS) the composition is skewed to low complexity. Over residues 365–382 (GSEFDSSERAQTAQSGTW) the composition is skewed to polar residues. A compositionally biased stretch (basic and acidic residues) spans 385-400 (GGRDEVEKNNGLDVIR).

This sequence belongs to the FtsZ family. As to quaternary structure, homodimer. Polymerizes to form a dynamic ring structure in a strictly GTP-dependent manner. Interacts directly with several other division proteins. Interacts with SepF.

Its subcellular location is the cytoplasm. In terms of biological role, essential cell division protein that forms a contractile ring structure (Z ring) at the future cell division site. The regulation of the ring assembly controls the timing and the location of cell division. One of the functions of the FtsZ ring is to recruit other cell division proteins to the septum to produce a new cell wall between the dividing cells. Binds GTP and shows GTPase activity. Required for division ring constriction. This is Cell division protein FtsZ 2 from Haloferax volcanii (strain ATCC 29605 / DSM 3757 / JCM 8879 / NBRC 14742 / NCIMB 2012 / VKM B-1768 / DS2) (Halobacterium volcanii).